A 226-amino-acid chain; its full sequence is dITP/XTP pyrophosphatase (226 aa).

14–19 (TGNKDK) serves as a coordination point for substrate. Positions 49 and 83 each coordinate Mg(2+). The active-site Proton acceptor is D83. Substrate contacts are provided by residues T84, 176–179 (FGYD), K199, and 204–205 (HR).

This sequence belongs to the HAM1 NTPase family. In terms of assembly, homodimer. Mg(2+) is required as a cofactor.

It carries out the reaction XTP + H2O = XMP + diphosphate + H(+). The enzyme catalyses dITP + H2O = dIMP + diphosphate + H(+). It catalyses the reaction ITP + H2O = IMP + diphosphate + H(+). Functionally, pyrophosphatase that catalyzes the hydrolysis of nucleoside triphosphates to their monophosphate derivatives, with a high preference for the non-canonical purine nucleotides XTP (xanthosine triphosphate), dITP (deoxyinosine triphosphate) and ITP. Seems to function as a house-cleaning enzyme that removes non-canonical purine nucleotides from the nucleotide pool, thus preventing their incorporation into DNA/RNA and avoiding chromosomal lesions. This chain is dITP/XTP pyrophosphatase, found in Chlorobaculum tepidum (strain ATCC 49652 / DSM 12025 / NBRC 103806 / TLS) (Chlorobium tepidum).